We begin with the raw amino-acid sequence, 331 residues long: GTP 3',8-cyclase (331 aa).

Residues 9-233 (PFGRRITYLR…VRSSKVTGGP (225 aa)) enclose the Radical SAM core domain. Arg18 is a GTP binding site. The [4Fe-4S] cluster site is built by Cys25 and Cys29. Tyr31 serves as a coordination point for S-adenosyl-L-methionine. Position 32 (Cys32) interacts with [4Fe-4S] cluster. Arg67 contacts GTP. S-adenosyl-L-methionine is bound at residue Gly71. GTP is bound at residue Thr98. Ser122 contributes to the S-adenosyl-L-methionine binding site. Lys159 is a binding site for GTP. S-adenosyl-L-methionine is bound at residue Met193. [4Fe-4S] cluster-binding residues include Cys257 and Cys260. 262 to 264 (RVR) is a GTP binding site. Cys274 is a [4Fe-4S] cluster binding site.

The protein belongs to the radical SAM superfamily. MoaA family. In terms of assembly, monomer and homodimer. The cofactor is [4Fe-4S] cluster.

The catalysed reaction is GTP + AH2 + S-adenosyl-L-methionine = (8S)-3',8-cyclo-7,8-dihydroguanosine 5'-triphosphate + 5'-deoxyadenosine + L-methionine + A + H(+). It participates in cofactor biosynthesis; molybdopterin biosynthesis. Catalyzes the cyclization of GTP to (8S)-3',8-cyclo-7,8-dihydroguanosine 5'-triphosphate. This chain is GTP 3',8-cyclase, found in Ectopseudomonas mendocina (strain ymp) (Pseudomonas mendocina).